Reading from the N-terminus, the 177-residue chain is 3-isopropylmalate dehydratase small subunit 1 (177 aa).

The disordered stretch occupies residues 157 to 177; sequence GRFPGEEPGAEASTETASAAE. The segment covering 162–177 has biased composition (low complexity); the sequence is EEPGAEASTETASAAE.

It belongs to the LeuD family. LeuD type 2 subfamily. In terms of assembly, heterodimer of LeuC and LeuD.

It carries out the reaction (2R,3S)-3-isopropylmalate = (2S)-2-isopropylmalate. It functions in the pathway amino-acid biosynthesis; L-leucine biosynthesis; L-leucine from 3-methyl-2-oxobutanoate: step 2/4. Functionally, catalyzes the isomerization between 2-isopropylmalate and 3-isopropylmalate, via the formation of 2-isopropylmaleate. In Deinococcus radiodurans (strain ATCC 13939 / DSM 20539 / JCM 16871 / CCUG 27074 / LMG 4051 / NBRC 15346 / NCIMB 9279 / VKM B-1422 / R1), this protein is 3-isopropylmalate dehydratase small subunit 1 (leuD1).